We begin with the raw amino-acid sequence, 935 residues long: GPI ethanolamine phosphate transferase 1 (935 aa).

Residues Met-1–Leu-5 are Cytoplasmic-facing. The chain crosses the membrane as a helical span at residues Leu-6–Val-26. Residues Thr-27–Arg-449 are Lumenal-facing. Asn-86, Asn-134, Asn-315, and Asn-398 each carry an N-linked (GlcNAc...) asparagine glycan. Residues Ser-450–Leu-470 traverse the membrane as a helical segment. At Asn-471–Ser-483 the chain is on the cytoplasmic side. A helical membrane pass occupies residues Val-484–Ile-503. Residues Gln-504–Phe-509 lie on the Lumenal side of the membrane. Residues Tyr-510 to Asn-530 form a helical membrane-spanning segment. Residues Thr-531–Gly-547 lie on the Cytoplasmic side of the membrane. A helical membrane pass occupies residues Phe-548 to Val-568. Residues Tyr-569–Gly-576 are Lumenal-facing. A helical membrane pass occupies residues Phe-577–Phe-597. Residues Ser-598 to Lys-600 are Cytoplasmic-facing. The chain crosses the membrane as a helical span at residues Thr-601 to Val-621. Residues Asn-622–Ser-626 are Lumenal-facing. Residues Leu-627 to Tyr-647 form a helical membrane-spanning segment. Over Arg-648–Gln-663 the chain is Cytoplasmic. Residues Leu-664–Ser-684 form a helical membrane-spanning segment. Topologically, residues Leu-685–Asn-688 are lumenal. A helical transmembrane segment spans residues Ile-689–Ile-709. The Cytoplasmic portion of the chain corresponds to Pro-710 to Cys-737. Residues Met-738 to Trp-758 form a helical membrane-spanning segment. The Lumenal portion of the chain corresponds to Met-759 to Arg-792. Residues Ile-793–Ser-813 traverse the membrane as a helical segment. The Cytoplasmic segment spans residues Leu-814–Gly-835. A helical transmembrane segment spans residues Ala-836–Met-856. At Asn-857–Gln-865 the chain is on the lumenal side. A helical transmembrane segment spans residues Val-866 to Val-886. Over Lys-887 to Asp-894 the chain is Cytoplasmic. The chain crosses the membrane as a helical span at residues Ile-895 to Leu-915. The Lumenal portion of the chain corresponds to Glu-916–Asn-935. Residue Asn-925 is glycosylated (N-linked (GlcNAc...) asparagine).

This sequence belongs to the PIGG/PIGN/PIGO family. PIGN subfamily.

Its subcellular location is the endoplasmic reticulum membrane. Its pathway is glycolipid biosynthesis; glycosylphosphatidylinositol-anchor biosynthesis. Ethanolamine phosphate transferase involved in glycosylphosphatidylinositol-anchor biosynthesis. Transfers ethanolamine phosphate to the first alpha-1,4-linked mannose of the glycosylphosphatidylinositol precursor of GPI-anchor. The polypeptide is GPI ethanolamine phosphate transferase 1 (its8) (Schizosaccharomyces pombe (strain 972 / ATCC 24843) (Fission yeast)).